Reading from the N-terminus, the 520-residue chain is Arginine biosynthesis bifunctional protein ArgJ, chloroplastic (520 aa).

The substrate site is built by Thr-264, Lys-290, Thr-301, Glu-388, Asn-515, and Thr-520. Thr-301 serves as the catalytic Nucleophile.

It belongs to the ArgJ family. Heterodimer of an alpha and a beta chain.

The protein resides in the plastid. Its subcellular location is the chloroplast. The catalysed reaction is N(2)-acetyl-L-ornithine + L-glutamate = N-acetyl-L-glutamate + L-ornithine. It carries out the reaction L-glutamate + acetyl-CoA = N-acetyl-L-glutamate + CoA + H(+). The protein operates within amino-acid biosynthesis; L-arginine biosynthesis; L-ornithine and N-acetyl-L-glutamate from L-glutamate and N(2)-acetyl-L-ornithine (cyclic): step 1/1. It participates in amino-acid biosynthesis; L-arginine biosynthesis; N(2)-acetyl-L-ornithine from L-glutamate: step 1/4. In terms of biological role, catalyzes two activities which are involved in the cyclic version of arginine biosynthesis: the synthesis of acetylglutamate from glutamate and acetyl-CoA, and of ornithine by transacetylation between acetylornithine and glutamate. The sequence is that of Arginine biosynthesis bifunctional protein ArgJ, chloroplastic from Physcomitrium patens (Spreading-leaved earth moss).